The following is a 163-amino-acid chain: RRM-domain-containing protein ECU01_0840 (163 aa).

In terms of domain architecture, RRM spans 84–163 (CSVKLSNLPL…SLGLSAEIAR (80 aa)).

This chain is RRM-domain-containing protein ECU01_0840, found in Encephalitozoon cuniculi (strain GB-M1) (Microsporidian parasite).